Here is a 410-residue protein sequence, read N- to C-terminus: Multifunctional CCA protein (410 aa).

The ATP site is built by Gly8 and Arg11. CTP-binding residues include Gly8 and Arg11. The Mg(2+) site is built by Glu21 and Asp23. ATP-binding residues include Arg91, Arg137, and Arg140. The CTP site is built by Arg91, Arg137, and Arg140. Residues 228–329 (TGIHSLMTLR…VKLLEQVDAF (102 aa)) form the HD domain.

It belongs to the tRNA nucleotidyltransferase/poly(A) polymerase family. Bacterial CCA-adding enzyme type 1 subfamily. In terms of assembly, monomer. Can also form homodimers and oligomers. The cofactor is Mg(2+). Requires Ni(2+) as cofactor.

The catalysed reaction is a tRNA precursor + 2 CTP + ATP = a tRNA with a 3' CCA end + 3 diphosphate. It catalyses the reaction a tRNA with a 3' CCA end + 2 CTP + ATP = a tRNA with a 3' CCACCA end + 3 diphosphate. Catalyzes the addition and repair of the essential 3'-terminal CCA sequence in tRNAs without using a nucleic acid template. Adds these three nucleotides in the order of C, C, and A to the tRNA nucleotide-73, using CTP and ATP as substrates and producing inorganic pyrophosphate. tRNA 3'-terminal CCA addition is required both for tRNA processing and repair. Also involved in tRNA surveillance by mediating tandem CCA addition to generate a CCACCA at the 3' terminus of unstable tRNAs. While stable tRNAs receive only 3'-terminal CCA, unstable tRNAs are marked with CCACCA and rapidly degraded. This Legionella pneumophila subsp. pneumophila (strain Philadelphia 1 / ATCC 33152 / DSM 7513) protein is Multifunctional CCA protein.